Reading from the N-terminus, the 569-residue chain is Undecaprenyl phosphate-alpha-4-amino-4-deoxy-L-arabinose arabinosyl transferase 1 (569 aa).

The next 12 helical transmembrane spans lie at 27–47 (GLIL…GLWI), 98–120 (LFGV…YLLA), 129–149 (INAA…QAGY), 151–171 (NLDP…WFAI), 194–214 (LMTK…PYML), 225–245 (YGLV…LAVH), 275–295 (PWWF…LLLP), 311–331 (AYLA…SGKL), 334–354 (YIMP…VKWL), 366–386 (GVFN…LQAT), 396–416 (FSLS…ALQV), and 420–440 (LTLW…LPAA).

The protein belongs to the glycosyltransferase 83 family.

It is found in the cell inner membrane. The enzyme catalyses 4-amino-4-deoxy-alpha-L-arabinopyranosyl di-trans,octa-cis-undecaprenyl phosphate + lipid IVA = lipid IIA + di-trans,octa-cis-undecaprenyl phosphate.. The protein operates within lipopolysaccharide metabolism; 4-amino-4-deoxy-beta-L-arabinose-lipid A biosynthesis. Catalyzes the transfer of the L-Ara4N moiety of the glycolipid undecaprenyl phosphate-alpha-L-Ara4N to lipid A. The modified arabinose is attached to lipid A and is required for resistance to polymyxin and cationic antimicrobial peptides. This Pseudomonas fluorescens (strain Pf0-1) protein is Undecaprenyl phosphate-alpha-4-amino-4-deoxy-L-arabinose arabinosyl transferase 1.